A 742-amino-acid chain; its full sequence is Photosystem I P700 chlorophyll a apoprotein A2 2 (742 aa).

Transmembrane regions (helical) follow at residues 46–69, 135–158, 175–199, 273–291, 334–357, 373–399, 421–443, and 524–542; these read IFAT…FHVA, LYQG…LHLQ, LNHH…HVAI, MAHH…GHMY, LHFQ…QHMY, AALY…IFWI, AIIS…IYVH, and FLVH…LICV. Cys566 and Cys575 together coordinate [4Fe-4S] cluster. 2 consecutive transmembrane segments (helical) span residues 583-604 and 651-673; these read SFYL…YWHW and LSVW…MFLI. Residues His662, Met670, and Tyr678 each contribute to the chlorophyll a site. Position 679 (Trp679) interacts with phylloquinone. Residues 715 to 735 traverse the membrane as a helical segment; the sequence is LVGLAHFTVGYILTYAAFLIA.

Belongs to the PsaA/PsaB family. The PsaA/B heterodimer binds the P700 chlorophyll special pair and subsequent electron acceptors. PSI consists of a core antenna complex that captures photons, and an electron transfer chain that converts photonic excitation into a charge separation. The cyanobacterial PSI reaction center is composed of one copy each of PsaA,B,C,D,E,F,I,J,K,L,M and X, and forms trimeric complexes. The cofactor is PSI electron transfer chain: 5 chlorophyll a, 1 chlorophyll a', 2 phylloquinones and 3 4Fe-4S clusters. PSI core antenna: 90 chlorophyll a, 22 carotenoids, 3 phospholipids and 1 galactolipid. P700 is a chlorophyll a/chlorophyll a' dimer, A0 is one or more chlorophyll a, A1 is one or both phylloquinones and FX is a shared 4Fe-4S iron-sulfur center..

The protein resides in the cellular thylakoid membrane. It catalyses the reaction reduced [plastocyanin] + hnu + oxidized [2Fe-2S]-[ferredoxin] = oxidized [plastocyanin] + reduced [2Fe-2S]-[ferredoxin]. PsaA and PsaB bind P700, the primary electron donor of photosystem I (PSI), as well as the electron acceptors A0, A1 and FX. PSI is a plastocyanin/cytochrome c6-ferredoxin oxidoreductase, converting photonic excitation into a charge separation, which transfers an electron from the donor P700 chlorophyll pair to the spectroscopically characterized acceptors A0, A1, FX, FA and FB in turn. Oxidized P700 is reduced on the lumenal side of the thylakoid membrane by plastocyanin or cytochrome c6. The protein is Photosystem I P700 chlorophyll a apoprotein A2 2 (psaB2) of Nostoc sp. (strain PCC 7120 / SAG 25.82 / UTEX 2576).